The following is a 325-amino-acid chain: MSTSERPPSPSSMAEDFAVEPLSPDFGFYLRTTELLAERHSPVQHIEIVQTPLFGRAMRIDGCFMTSEQDEFFYHEPMVHLPAITHGDPRQALVVGGGDGGTAYNLLRYPNMERVVLAELDRDVIDMARTWLPKVHRGAFEDPRLELHLGDGRAFTGNCKNQFDQIVLDLTDPFGPAISLYTRDFYRACRRALKPGGVLSLHIQSPIYRSPIMARLLASLRDVFGVVRPYLQYVPLYGTLWAMAMASDSADPLSLSATEIDARLTQNGLIDLKLYSGGTHHALLNLPPFVQTLLSEPAYPIDDGNSLDDINLDPREAGKLKLIQT.

The PABS domain occupies 11-248; it reads SSMAEDFAVE…TLWAMAMASD (238 aa). Glutamine 44 serves as a coordination point for S-methyl-5'-thioadenosine. Spermidine is bound by residues histidine 75 and aspartate 99. Residues glutamate 119 and 151-152 each bind S-methyl-5'-thioadenosine; that span reads DG. Aspartate 169 serves as the catalytic Proton acceptor. Proline 176 is a binding site for S-methyl-5'-thioadenosine.

The protein belongs to the spermidine/spermine synthase family. In terms of assembly, homodimer or homotetramer.

The protein localises to the cytoplasm. It catalyses the reaction S-adenosyl 3-(methylsulfanyl)propylamine + putrescine = S-methyl-5'-thioadenosine + spermidine + H(+). Its pathway is amine and polyamine biosynthesis; spermidine biosynthesis; spermidine from putrescine: step 1/1. Catalyzes the irreversible transfer of a propylamine group from the amino donor S-adenosylmethioninamine (decarboxy-AdoMet) to putrescine (1,4-diaminobutane) to yield spermidine. In Nitrosomonas europaea (strain ATCC 19718 / CIP 103999 / KCTC 2705 / NBRC 14298), this protein is Polyamine aminopropyltransferase.